The sequence spans 433 residues: Glutamate-1-semialdehyde 2,1-aminomutase (433 aa).

N6-(pyridoxal phosphate)lysine is present on Lys273.

This sequence belongs to the class-III pyridoxal-phosphate-dependent aminotransferase family. HemL subfamily. As to quaternary structure, homodimer. Pyridoxal 5'-phosphate is required as a cofactor.

It localises to the cytoplasm. It carries out the reaction (S)-4-amino-5-oxopentanoate = 5-aminolevulinate. It functions in the pathway porphyrin-containing compound metabolism; protoporphyrin-IX biosynthesis; 5-aminolevulinate from L-glutamyl-tRNA(Glu): step 2/2. This chain is Glutamate-1-semialdehyde 2,1-aminomutase, found in Ralstonia pickettii (strain 12J).